Consider the following 164-residue polypeptide: MADS-box transcription factor 51 (164 aa).

Positions 2 to 62 constitute an MADS-box domain; the sequence is ARRGRVQLRR…GKLYEYSSSS (61 aa). Residues 133 to 164 are disordered; that stretch reads TKSKKMLAKQNGEGSRSRANSSGSRGQEEGSA.

In terms of tissue distribution, widely expressed.

Its subcellular location is the nucleus. Functionally, probable transcription factor involved in the regulation of flowering time under short day (SD) conditions. Functions as a promoter of flowering under SD conditions, upstream of EHD1, HD3A and MADS14, but downstream of GIGANTEA (GI). May transmit a SD promotion signal from GI to EHD1. Functions independently of MADS50 to control flowering time. In Oryza sativa subsp. japonica (Rice), this protein is MADS-box transcription factor 51.